A 287-amino-acid chain; its full sequence is Neuferricin homolog (287 aa).

Residues Met1–Gly22 form the signal peptide. The Cytochrome b5 heme-binding domain occupies Gly61–Gly146. A coiled-coil region spans residues Tyr175 to Asn204.

It belongs to the cytochrome b5 family. MAPR subfamily.

Its subcellular location is the secreted. Functionally, heme-binding protein. The chain is Neuferricin homolog from Drosophila melanogaster (Fruit fly).